The primary structure comprises 147 residues: 3-dehydroquinate dehydratase (147 aa).

The active-site Proton acceptor is the Tyr23. Residues Asn74, His80, and Asp87 each contribute to the substrate site. The Proton donor role is filled by His100. Substrate contacts are provided by residues 101–102 (LS) and Arg111.

It belongs to the type-II 3-dehydroquinase family. As to quaternary structure, homododecamer.

The catalysed reaction is 3-dehydroquinate = 3-dehydroshikimate + H2O. It functions in the pathway metabolic intermediate biosynthesis; chorismate biosynthesis; chorismate from D-erythrose 4-phosphate and phosphoenolpyruvate: step 3/7. Its function is as follows. Catalyzes a trans-dehydration via an enolate intermediate. This is 3-dehydroquinate dehydratase from Clostridium botulinum (strain Okra / Type B1).